A 362-amino-acid polypeptide reads, in one-letter code: MQVSNSMSLNDEEDDIEFINYIPLLASPINSSTCSTSIHDKCPFKQHISENGQNFGSAISSNISQRNFKTLRASHLSQYRDCNRENNTEDKNVISTGIAVNEKYQSVLKLKEKAPQISSAAKRKSFIKERGMLAKCFLARLEDEVFQGRLTSSLEKKEIGIVWSKSFSTTAGRANLKRNNKDAPLGKKTYAYIELSDKVIVTKERLYNTLAHEVCHLACWIIDNEMQNPHGACFKAWGKRIMNNMPYIEITSKHNYDIDFKYKWLCINEKCNKLYGRHSKSINPQKQVCRLCKSQIKQICPKIKQPNAFQIFLKENSKRLRKLHPHITHKELMKKLSDEYHRTKDAKQNVSKSVSLISSSDL.

The SprT-like domain occupies Lys-135–Ile-299. The HMG box DNA-binding region spans Pro-306–Gln-348.

It is found in the nucleus. Its subcellular location is the cytoplasm. It localises to the cytoskeleton. The protein resides in the spindle. This is HMG box-containing protein C19G7.04 from Schizosaccharomyces pombe (strain 972 / ATCC 24843) (Fission yeast).